The following is a 682-amino-acid chain: 1,4-alpha-glucan-branching enzyme (682 aa).

Positions 88 and 124 each coordinate (1,4-alpha-D-glucosyl)n. Residue aspartate 342 is the Nucleophile of the active site. Glutamate 397 (proton donor) is an active-site residue.

It belongs to the glycosyl hydrolase 13 family. GlgB subfamily.

Its subcellular location is the cytoplasm. It catalyses the reaction Transfers a segment of a (1-&gt;4)-alpha-D-glucan chain to a primary hydroxy group in a similar glucan chain.. It participates in glycan biosynthesis; glycogen biosynthesis. In terms of biological role, glycogen-branching enzyme participates in the glycogen biosynthetic process along with glycogenin and glycogen synthase. Generates alpha-1,6-glucosidic branches from alpha-1,4-linked glucose chains, to increase solubility of the glycogen polymer. The sequence is that of 1,4-alpha-glucan-branching enzyme (GLC3) from Cryptococcus neoformans var. neoformans serotype D (strain B-3501A) (Filobasidiella neoformans).